The sequence spans 376 residues: N-acetyldiaminopimelate deacetylase (376 aa).

D69 is an active-site residue. E128 functions as the Proton acceptor in the catalytic mechanism.

Belongs to the peptidase M20A family. N-acetyldiaminopimelate deacetylase subfamily.

The enzyme catalyses N-acetyl-(2S,6S)-2,6-diaminopimelate + H2O = (2S,6S)-2,6-diaminopimelate + acetate. The protein operates within amino-acid biosynthesis; L-lysine biosynthesis via DAP pathway; LL-2,6-diaminopimelate from (S)-tetrahydrodipicolinate (acetylase route): step 3/3. In terms of biological role, catalyzes the conversion of N-acetyl-diaminopimelate to diaminopimelate and acetate. The sequence is that of N-acetyldiaminopimelate deacetylase from Bacillus cereus (strain G9842).